The sequence spans 260 residues: 14-3-3 protein 3 (260 aa).

Belongs to the 14-3-3 family. In terms of assembly, homodimer.

This chain is 14-3-3 protein 3 (TFT3), found in Solanum lycopersicum (Tomato).